The primary structure comprises 85 residues: UPF0297 protein LBA0418 (85 aa).

This sequence belongs to the UPF0297 family.

The protein is UPF0297 protein LBA0418 of Lactobacillus acidophilus (strain ATCC 700396 / NCK56 / N2 / NCFM).